The following is a 168-amino-acid chain: Sec-independent protein translocase protein TatB (168 aa).

The chain crosses the membrane as a helical span at residues 1–21 (MIDLGISKLALIGAVALIVIG). Disordered stretches follow at residues 92–132 (FDGS…QGAR) and 146–168 (VQSG…SFFE). Residues 94 to 107 (GSASSSSSSDTGSG) show a composition bias toward low complexity. Residues 117-126 (KSHNGRKSWR) are compositionally biased toward basic residues.

The protein belongs to the TatB family. In terms of assembly, the Tat system comprises two distinct complexes: a TatABC complex, containing multiple copies of TatA, TatB and TatC subunits, and a separate TatA complex, containing only TatA subunits. Substrates initially bind to the TatABC complex, which probably triggers association of the separate TatA complex to form the active translocon.

The protein resides in the cell inner membrane. In terms of biological role, part of the twin-arginine translocation (Tat) system that transports large folded proteins containing a characteristic twin-arginine motif in their signal peptide across membranes. Together with TatC, TatB is part of a receptor directly interacting with Tat signal peptides. TatB may form an oligomeric binding site that transiently accommodates folded Tat precursor proteins before their translocation. In Cupriavidus metallidurans (strain ATCC 43123 / DSM 2839 / NBRC 102507 / CH34) (Ralstonia metallidurans), this protein is Sec-independent protein translocase protein TatB.